Here is a 127-residue protein sequence, read N- to C-terminus: MLQLLLAVFIGGGTGSVARWLLSMRFNPLHQAIPLGTLTANLIGAFIIGMGFAWFSRMTNIDPVWKVLITTGFCGGLTTFSTFSAEVVFLLQEGRFGWTLLNVFVNLLGSFAMTALAFWLFSASTAH.

4 consecutive transmembrane segments (helical) span residues 4–24 (LLLAVFIGGGTGSVARWLLSM), 35–55 (LGTLTANLIGAFIIGMGFAWF), 71–91 (TGFCGGLTTFSTFSAEVVFLL), and 103–123 (VFVNLLGSFAMTALAFWLFSA). Na(+)-binding residues include Gly-75 and Thr-78.

The protein belongs to the fluoride channel Fluc/FEX (TC 1.A.43) family.

The protein localises to the cell inner membrane. It catalyses the reaction fluoride(in) = fluoride(out). Na(+) is not transported, but it plays an essential structural role and its presence is essential for fluoride channel function. In terms of biological role, fluoride-specific ion channel. Important for reducing fluoride concentration in the cell, thus reducing its toxicity. In Escherichia coli O7:K1 (strain IAI39 / ExPEC), this protein is Fluoride-specific ion channel FluC.